Reading from the N-terminus, the 259-residue chain is Proteasome assembly chaperone 2 (259 aa).

The protein belongs to the PSMG2 family. As to quaternary structure, forms a heterodimer with psmg1. Post-translationally, degraded by the proteasome upon completion of 20S proteasome maturation.

The protein localises to the nucleus. Its function is as follows. Chaperone protein which promotes assembly of the 20S proteasome as part of a heterodimer with psmg1. The chain is Proteasome assembly chaperone 2 from Xenopus laevis (African clawed frog).